The primary structure comprises 155 residues: Cyanate hydratase (155 aa).

Catalysis depends on residues arginine 101, glutamate 104, and serine 127.

It belongs to the cyanase family.

The enzyme catalyses cyanate + hydrogencarbonate + 3 H(+) = NH4(+) + 2 CO2. Catalyzes the reaction of cyanate with bicarbonate to produce ammonia and carbon dioxide. The chain is Cyanate hydratase from Coccidioides posadasii (strain C735) (Valley fever fungus).